The following is a 310-amino-acid chain: Lipoyl synthase (310 aa).

The [4Fe-4S] cluster site is built by cysteine 54, cysteine 59, cysteine 65, cysteine 80, cysteine 84, cysteine 87, and serine 295. Residues 66–284 (FASGTATFLI…LFGEDNLGFM (219 aa)) enclose the Radical SAM core domain.

This sequence belongs to the radical SAM superfamily. Lipoyl synthase family. Requires [4Fe-4S] cluster as cofactor.

It localises to the cytoplasm. It catalyses the reaction [[Fe-S] cluster scaffold protein carrying a second [4Fe-4S](2+) cluster] + N(6)-octanoyl-L-lysyl-[protein] + 2 oxidized [2Fe-2S]-[ferredoxin] + 2 S-adenosyl-L-methionine + 4 H(+) = [[Fe-S] cluster scaffold protein] + N(6)-[(R)-dihydrolipoyl]-L-lysyl-[protein] + 4 Fe(3+) + 2 hydrogen sulfide + 2 5'-deoxyadenosine + 2 L-methionine + 2 reduced [2Fe-2S]-[ferredoxin]. The protein operates within protein modification; protein lipoylation via endogenous pathway; protein N(6)-(lipoyl)lysine from octanoyl-[acyl-carrier-protein]: step 2/2. Functionally, catalyzes the radical-mediated insertion of two sulfur atoms into the C-6 and C-8 positions of the octanoyl moiety bound to the lipoyl domains of lipoate-dependent enzymes, thereby converting the octanoylated domains into lipoylated derivatives. The sequence is that of Lipoyl synthase from Prochlorococcus marinus (strain MIT 9215).